The following is a 223-amino-acid chain: Alpha-enolase (223 aa).

Position 8 (S8) interacts with Mg(2+). Phosphotyrosine is present on Y12. K25 carries the N6-acetyllysine modification. Residue E39 participates in substrate binding. K61 carries the N6-acetyllysine modification. E69 functions as the Proton donor in the catalytic mechanism. At K87 the chain carries N6-acetyllysine; alternate. K87 carries the N6-malonyllysine; alternate modification. Residue K87 is modified to N6-succinyllysine; alternate. D99 and D119 together coordinate Mg(2+). D119 is a binding site for substrate. Residues K133 and K141 each carry the N6-acetyllysine modification. The active-site Proton acceptor is the K141. Residues S168–S171 and K192 contribute to the substrate site. The tract at residues Y202–K223 is required for interaction with PLG. K215 is subject to N6-acetyllysine; alternate. K215 carries the post-translational modification N6-malonyllysine; alternate. Residue K215 is modified to N6-succinyllysine; alternate.

The protein belongs to the enolase family. Mammalian enolase is composed of 3 isozyme subunits, alpha, beta and gamma, which can form homodimers or heterodimers which are cell-type and development-specific. ENO1 interacts with PLG in the neuronal plasma membrane and promotes its activation. The C-terminal lysine is required for this binding. Interacts with ENO4 and PGAM2. Interacts with CMTM6. The cofactor is Mg(2+). In terms of processing, ISGylated. Lysine 2-hydroxyisobutyrylation (Khib) by p300/EP300 activates the phosphopyruvate hydratase activity.

The protein localises to the cytoplasm. Its subcellular location is the cell membrane. The catalysed reaction is (2R)-2-phosphoglycerate = phosphoenolpyruvate + H2O. It functions in the pathway carbohydrate degradation; glycolysis; pyruvate from D-glyceraldehyde 3-phosphate: step 4/5. Its function is as follows. Glycolytic enzyme the catalyzes the conversion of 2-phosphoglycerate to phosphoenolpyruvate. In addition to glycolysis, involved in various processes such as growth control, hypoxia tolerance and allergic responses. May also function in the intravascular and pericellular fibrinolytic system due to its ability to serve as a receptor and activator of plasminogen on the cell surface of several cell-types such as leukocytes and neurons. Stimulates immunoglobulin production. This chain is Alpha-enolase, found in Mesocricetus auratus (Golden hamster).